Consider the following 712-residue polypeptide: Golgin candidate 3 (712 aa).

The tract at residues 23–49 is disordered; sequence DEEEDDLHKYGSANGVSNSDRRNSSGF. A compositionally biased stretch (polar residues) spans 36–49; sequence NGVSNSDRRNSSGF. The stretch at 65 to 134 forms a coiled coil; that stretch reads AHHEIERYKA…LKEARTDISR (70 aa). Residues 135–150 show a composition bias toward polar residues; it reads GSNNYAIKGNNDQSPN. Disordered stretches follow at residues 135-176 and 306-347; these read GSNN…TDSF and ESRK…MEQS. 3 coiled-coil regions span residues 197 to 313, 340 to 558, and 659 to 690; these read QATE…LTNS, GKEE…LNRM, and LKDAEERERREAEEAAASKAKQDSERTRQEAA. Over residues 328-344 the composition is skewed to basic and acidic residues; that stretch reads STLDKEKPESFPGKEEM. In terms of domain architecture, GRIP spans 557-608; that stretch reads RMSMESDYLVDRRIVIKLLVTYFQKNHNKEVLDLMVRMLGFSEEDKERIGAA. Residues 666 to 712 form a disordered region; the sequence is ERREAEEAAASKAKQDSERTRQEAALHDSEFSTVPLRSSESNQRLSR. Positions 678 to 695 are enriched in basic and acidic residues; the sequence is AKQDSERTRQEAALHDSE. The segment covering 696–712 has biased composition (polar residues); sequence FSTVPLRSSESNQRLSR.

In terms of assembly, interacts with ARF1; preferentially with the active form of the protein.

It is found in the golgi apparatus. The protein localises to the endosome. Its function is as follows. Golgi matrix protein playing a role in tethering of vesicles to Golgi membranes and in maintaining the overall structure of the Golgi apparatus. In Arabidopsis thaliana (Mouse-ear cress), this protein is Golgin candidate 3 (GC3).